The sequence spans 104 residues: Flagellar hook-basal body complex protein FliE (104 aa).

Belongs to the FliE family.

Its subcellular location is the bacterial flagellum basal body. The protein is Flagellar hook-basal body complex protein FliE of Pectobacterium atrosepticum (strain SCRI 1043 / ATCC BAA-672) (Erwinia carotovora subsp. atroseptica).